The sequence spans 148 residues: Ribonuclease H (148 aa).

The RNase H type-1 domain occupies 3–144 (AEETVEIFTD…ADALANRGIE (142 aa)). 4 residues coordinate Mg(2+): Asp-12, Glu-50, Asp-72, and Asp-136. A disordered region spans residues 129–148 (HPENERADALANRGIEELKG).

This sequence belongs to the RNase H family. In terms of assembly, monomer. Requires Mg(2+) as cofactor.

Its subcellular location is the cytoplasm. It carries out the reaction Endonucleolytic cleavage to 5'-phosphomonoester.. Endonuclease that specifically degrades the RNA of RNA-DNA hybrids. This Dechloromonas aromatica (strain RCB) protein is Ribonuclease H.